Consider the following 211-residue polypeptide: Fucoxanthin-chlorophyll a-c binding protein F, chloroplastic (211 aa).

Residues 1-33 constitute a chloroplast transit peptide; the sequence is AIACAAAPGLRGPSAFNGAALSTPAKSSSAMKM. The next 3 membrane-spanning stretches (helical) occupy residues 75–95, 116–136, and 177–197; these read IAMLAIAGHLTQQNTRLPGML, IPPGGLAQIFGFIGFLELAVM, and GRAAQMGILGMMVHEELSNQP.

This sequence belongs to the fucoxanthin chlorophyll protein family. As to quaternary structure, the LHC complex of chromophytic algae is composed of fucoxanthin, chlorophyll A and C bound non-covalently by fucoxanthin chlorophyll proteins (FCPs). The ratio of pigments in this LHC is; fucoxanthin: chlorophyll C: chlorophyll A; (0.6-1): (0.1-0.3): (1).

It localises to the plastid. The protein localises to the chloroplast thylakoid membrane. The light-harvesting complex (LHC) functions as a light receptor, it captures and delivers excitation energy to photosystems with which it is closely associated. Energy is transferred from the carotenoid and chlorophyll C (or B) to chlorophyll A and the photosynthetic reaction centers where it is used to synthesize ATP and reducing power. This is Fucoxanthin-chlorophyll a-c binding protein F, chloroplastic (FCPF) from Macrocystis pyrifera (Giant kelp).